We begin with the raw amino-acid sequence, 205 residues long: Transcriptional regulator GfcR (205 aa).

This sequence belongs to the purine/pyrimidine phosphoribosyltransferase family. GfcR subfamily.

The sequence is that of Transcriptional regulator GfcR from Methanococcus maripaludis (strain DSM 14266 / JCM 13030 / NBRC 101832 / S2 / LL).